The following is a 950-amino-acid chain: Zinc finger CCCH domain-containing protein 3 (950 aa).

Disordered regions lie at residues 32 to 106 (GNSS…HPEP), 127 to 182 (IKPP…TKVG), 201 to 220 (VVKS…RTVS), and 314 to 489 (SEKS…VLRK). Over residues 56–74 (RPSRRGFSSHHGPSWRKKY) the composition is skewed to basic residues. Polar residues predominate over residues 76 to 96 (LVNQPVESSDPASDPAFQTSL). Residues 327 to 338 (PRTTLESGNKAT) are compositionally biased toward polar residues. Residues 344-360 (KTEKPQPKVDPEVRPEK) are compositionally biased toward basic and acidic residues. The segment covering 370 to 388 (SPSKYKWKASSPSASSSSS) has biased composition (low complexity). Positions 402 to 412 (SQLSPVPSRPT) are enriched in polar residues. Phosphoserine is present on serine 405. The span at 438-449 (VKSRTKIIRRRG) shows a compositional bias: basic residues. A compositionally biased stretch (polar residues) spans 460–470 (SPTTATTSKNH). 5 consecutive C3H1-type zinc fingers follow at residues 662-690 (EKKR…HDPE), 694-717 (VCTR…HHVS), 718-744 (KEKM…HVYV), 745-772 (SRKA…HTLL), and 773-795 (CPDF…HRNQ). Positions 793-950 (RNQKRHGRRT…GKPLHIKPRL (158 aa)) are disordered. Over residues 828 to 838 (PTTTQRSVRQM) the composition is skewed to polar residues. Residues 839–849 (SSGLASGAEAP) are compositionally biased toward low complexity. Phosphoserine occurs at positions 851 and 855. Residues 857-888 (RVLASTSTLSSKATAASSPSPSPSTSSPAPSL) are compositionally biased toward low complexity. Polar residues predominate over residues 914–928 (SLHSSPSPGGQTETG). Phosphoserine occurs at positions 918, 920, and 934.

In terms of assembly, interacts with SMAD1, SMAD3, SMAD4, CPSF2 and CPSF3.

It is found in the nucleus. In terms of biological role, required for the export of polyadenylated mRNAs from the nucleus. Enhances ACVR1B-induced SMAD-dependent transcription. Binds to single-stranded DNA but not to double-stranded DNA in vitro. Involved in RNA cleavage. In Mus musculus (Mouse), this protein is Zinc finger CCCH domain-containing protein 3 (Zc3h3).